Reading from the N-terminus, the 270-residue chain is Methylthioribulose-1-phosphate dehydratase (270 aa).

C122 provides a ligand contact to substrate. The Zn(2+) site is built by H140 and H142. E165 serves as the catalytic Proton donor/acceptor. H230 contacts Zn(2+).

The protein belongs to the aldolase class II family. MtnB subfamily. Zn(2+) is required as a cofactor.

It is found in the cytoplasm. It catalyses the reaction 5-(methylsulfanyl)-D-ribulose 1-phosphate = 5-methylsulfanyl-2,3-dioxopentyl phosphate + H2O. It functions in the pathway amino-acid biosynthesis; L-methionine biosynthesis via salvage pathway; L-methionine from S-methyl-5-thio-alpha-D-ribose 1-phosphate: step 2/6. Catalyzes the dehydration of methylthioribulose-1-phosphate (MTRu-1-P) into 2,3-diketo-5-methylthiopentyl-1-phosphate (DK-MTP-1-P). The chain is Methylthioribulose-1-phosphate dehydratase from Candida albicans (strain WO-1) (Yeast).